The chain runs to 156 residues: Small ribosomal subunit protein uS7 (156 aa).

It belongs to the universal ribosomal protein uS7 family. In terms of assembly, part of the 30S ribosomal subunit. Contacts proteins S9 and S11.

Its function is as follows. One of the primary rRNA binding proteins, it binds directly to 16S rRNA where it nucleates assembly of the head domain of the 30S subunit. Is located at the subunit interface close to the decoding center, probably blocks exit of the E-site tRNA. This chain is Small ribosomal subunit protein uS7, found in Haemophilus influenzae (strain 86-028NP).